We begin with the raw amino-acid sequence, 147 residues long: Hemoglobin subunit gamma (147 aa).

The 145-residue stretch at 3-147 (HFTAEEKAII…VAIALGHKYH (145 aa)) folds into the Globin domain. Histidine 64 and histidine 93 together coordinate heme b.

The protein belongs to the globin family. As to quaternary structure, heterotetramer of two alpha chains and two gamma chains in fetal hemoglobin (Hb F). In terms of tissue distribution, red blood cells.

Functionally, gamma chains make up the fetal hemoglobin F, in combination with alpha chains. The polypeptide is Hemoglobin subunit gamma (HBG) (Cephalopachus bancanus (Western tarsier)).